The chain runs to 368 residues: Cytochrome b-c1 complex subunit 2, mitochondrial (368 aa).

The transit peptide at 1–16 directs the protein to the mitochondrion; it reads MLSAARLQFAQGSVRR. Residues Ser-141 and Ser-168 each carry the phosphoserine modification.

This sequence belongs to the peptidase M16 family. UQCRC2/QCR2 subfamily. As to quaternary structure, component of the ubiquinol-cytochrome c oxidoreductase (cytochrome b-c1 complex, complex III, CIII), a multisubunit enzyme composed of 10 subunits. The complex is composed of 3 respiratory subunits cytochrome b (COB), cytochrome c1 (CYT1) and Rieske protein (RIP1), 2 core protein subunits COR1 and QCR2, and 5 low-molecular weight protein subunits QCR6, QCR7, QCR8, QCR9 and QCR10. The complex exists as an obligatory dimer and forms supercomplexes (SCs) in the inner mitochondrial membrane with a monomer or a dimer of cytochrome c oxidase (complex IV, CIV), resulting in 2 different assemblies (supercomplexes III(2)IV and III(2)IV(2)).

The protein resides in the mitochondrion inner membrane. Functionally, component of the ubiquinol-cytochrome c oxidoreductase, a multisubunit transmembrane complex that is part of the mitochondrial electron transport chain which drives oxidative phosphorylation. The respiratory chain contains 3 multisubunit complexes succinate dehydrogenase (complex II, CII), ubiquinol-cytochrome c oxidoreductase (cytochrome b-c1 complex, complex III, CIII) and cytochrome c oxidase (complex IV, CIV), that cooperate to transfer electrons derived from NADH and succinate to molecular oxygen, creating an electrochemical gradient over the inner membrane that drives transmembrane transport and the ATP synthase. The cytochrome b-c1 complex catalyzes electron transfer from ubiquinol to cytochrome c, linking this redox reaction to translocation of protons across the mitochondrial inner membrane, with protons being carried across the membrane as hydrogens on the quinol. In the process called Q cycle, 2 protons are consumed from the matrix, 4 protons are released into the intermembrane space and 2 electrons are passed to cytochrome c. The sequence is that of Cytochrome b-c1 complex subunit 2, mitochondrial (QCR2) from Saccharomyces cerevisiae (strain ATCC 204508 / S288c) (Baker's yeast).